The sequence spans 173 residues: Sporulation-specific protein 12 (173 aa).

A compositionally biased stretch (polar residues) spans 1 to 12 (MSNKASDQSART). The tract at residues 1–56 (MSNKASDQSARTASILKTDITRENTITRSSSSNNDNYHHHNNINNYNESAKTGEDA) is disordered. Ser2 is subject to N-acetylserine. Residues Ser118 and Ser125 each carry the phosphoserine modification. The tract at residues 159 to 173 (DSEDVEIDEDEEYFY) is negative-charged tail.

It is required for meiosis I chromosome division during sporulation. A component of the FEAR (CDC14 early anaphase release) network which promotes CDC14 release from the nucleolus during early anaphase. The sequence is that of Sporulation-specific protein 12 (SPO12) from Saccharomyces cerevisiae (strain ATCC 204508 / S288c) (Baker's yeast).